A 357-amino-acid chain; its full sequence is Putative DNA directed RNA polymerase subunit R470 (357 aa).

Belongs to the archaeal Rpo11/eukaryotic RPB11/RPC19 RNA polymerase subunit family.

Its subcellular location is the virion. It catalyses the reaction RNA(n) + a ribonucleoside 5'-triphosphate = RNA(n+1) + diphosphate. The sequence is that of Putative DNA directed RNA polymerase subunit R470 from Acanthamoeba polyphaga mimivirus (APMV).